The primary structure comprises 123 residues: Unclassified hydrophobin 9 (123 aa).

A signal peptide spans 1-24 (MFFFNTKPIVFLVVLSVVATFAAA). Intrachain disulfides connect Cys-37-Cys-103, Cys-45-Cys-97, Cys-46-Cys-88, and Cys-104-Cys-117.

It belongs to the fungal hydrophobin family. As to quaternary structure, self-assembles to form functional amyloid fibrils called rodlets. Self-assembly into fibrillar rodlets occurs spontaneously at hydrophobic:hydrophilic interfaces and the rodlets further associate laterally to form amphipathic monolayers.

It is found in the secreted. Its subcellular location is the cell wall. In terms of biological role, aerial growth, conidiation, and dispersal of filamentous fungi in the environment rely upon a capability of their secreting small amphipathic proteins called hydrophobins (HPBs) with low sequence identity. Class I can self-assemble into an outermost layer of rodlet bundles on aerial cell surfaces, conferring cellular hydrophobicity that supports fungal growth, development and dispersal; whereas Class II form highly ordered films at water-air interfaces through intermolecular interactions but contribute nothing to the rodlet structure. In Pleurotus ostreatus (strain PC15) (Oyster mushroom), this protein is Unclassified hydrophobin 9.